The chain runs to 381 residues: Erythronate-4-phosphate dehydrogenase (381 aa).

Residues Ser45 and Thr66 each contribute to the substrate site. 2 residues coordinate NAD(+): Asp146 and Thr173. Residue Arg206 is part of the active site. Position 230 (Asp230) interacts with NAD(+). Glu235 is an active-site residue. His252 serves as the catalytic Proton donor. Gly255 is a binding site for NAD(+). Tyr256 serves as a coordination point for substrate.

Belongs to the D-isomer specific 2-hydroxyacid dehydrogenase family. PdxB subfamily. As to quaternary structure, homodimer.

It is found in the cytoplasm. It catalyses the reaction 4-phospho-D-erythronate + NAD(+) = (R)-3-hydroxy-2-oxo-4-phosphooxybutanoate + NADH + H(+). It functions in the pathway cofactor biosynthesis; pyridoxine 5'-phosphate biosynthesis; pyridoxine 5'-phosphate from D-erythrose 4-phosphate: step 2/5. In terms of biological role, catalyzes the oxidation of erythronate-4-phosphate to 3-hydroxy-2-oxo-4-phosphonooxybutanoate. The protein is Erythronate-4-phosphate dehydrogenase of Hahella chejuensis (strain KCTC 2396).